Reading from the N-terminus, the 274-residue chain is Diaminopimelate epimerase (274 aa).

Positions 11, 44, and 64 each coordinate substrate. Cys73 serves as the catalytic Proton donor. Residues Gly74–Asn75, Asn157, Asn190, and Glu208–Arg209 each bind substrate. The active-site Proton acceptor is Cys217. Gly218 to Ser219 contributes to the substrate binding site.

It belongs to the diaminopimelate epimerase family. Homodimer.

Its subcellular location is the cytoplasm. The enzyme catalyses (2S,6S)-2,6-diaminopimelate = meso-2,6-diaminopimelate. The protein operates within amino-acid biosynthesis; L-lysine biosynthesis via DAP pathway; DL-2,6-diaminopimelate from LL-2,6-diaminopimelate: step 1/1. Its function is as follows. Catalyzes the stereoinversion of LL-2,6-diaminopimelate (L,L-DAP) to meso-diaminopimelate (meso-DAP), a precursor of L-lysine and an essential component of the bacterial peptidoglycan. The polypeptide is Diaminopimelate epimerase (Mannheimia succiniciproducens (strain KCTC 0769BP / MBEL55E)).